We begin with the raw amino-acid sequence, 734 residues long: Photosystem I P700 chlorophyll a apoprotein A2 (734 aa).

A run of 8 helical transmembrane segments spans residues 46–69 (IFAS…FHVA), 135–158 (LYTG…LHLQ), 175–199 (LNHH…HVAI), 273–291 (IAHH…GHMY), 330–353 (IHFQ…QHMY), 369–395 (AALY…IFFI), 417–439 (AIIS…LYVH), and 517–535 (FLVH…LILV). 2 residues coordinate [4Fe-4S] cluster: Cys559 and Cys568. 2 helical membrane passes run 575–596 (AFYL…YWHW) and 643–665 (LSVW…MFLI). Residues His654, Met662, and Tyr670 each coordinate chlorophyll a. Trp671 serves as a coordination point for phylloquinone. The helical transmembrane segment at 707-727 (LVGLAHFSVGYIFTYAAFLIA) threads the bilayer.

This sequence belongs to the PsaA/PsaB family. In terms of assembly, the PsaA/B heterodimer binds the P700 chlorophyll special pair and subsequent electron acceptors. PSI consists of a core antenna complex that captures photons, and an electron transfer chain that converts photonic excitation into a charge separation. The eukaryotic PSI reaction center is composed of at least 11 subunits. It depends on P700 is a chlorophyll a/chlorophyll a' dimer, A0 is one or more chlorophyll a, A1 is one or both phylloquinones and FX is a shared 4Fe-4S iron-sulfur center. as a cofactor.

It is found in the plastid. The protein localises to the chloroplast thylakoid membrane. The catalysed reaction is reduced [plastocyanin] + hnu + oxidized [2Fe-2S]-[ferredoxin] = oxidized [plastocyanin] + reduced [2Fe-2S]-[ferredoxin]. Its function is as follows. PsaA and PsaB bind P700, the primary electron donor of photosystem I (PSI), as well as the electron acceptors A0, A1 and FX. PSI is a plastocyanin-ferredoxin oxidoreductase, converting photonic excitation into a charge separation, which transfers an electron from the donor P700 chlorophyll pair to the spectroscopically characterized acceptors A0, A1, FX, FA and FB in turn. Oxidized P700 is reduced on the lumenal side of the thylakoid membrane by plastocyanin. This Pelargonium hortorum (Common geranium) protein is Photosystem I P700 chlorophyll a apoprotein A2.